The sequence spans 201 residues: Small ribosomal subunit protein uS2 (201 aa).

This sequence belongs to the universal ribosomal protein uS2 family.

This Nanoarchaeum equitans (strain Kin4-M) protein is Small ribosomal subunit protein uS2.